A 111-amino-acid chain; its full sequence is Putative gamma-glutamylcyclotransferase BH1612 (111 aa).

Residue 14–17 (YGHL) coordinates substrate. Glu55 (proton acceptor) is an active-site residue.

Belongs to the gamma-glutamylcyclotransferase family.

In terms of biological role, putative gamma-glutamylcyclotransferase. The chain is Putative gamma-glutamylcyclotransferase BH1612 from Halalkalibacterium halodurans (strain ATCC BAA-125 / DSM 18197 / FERM 7344 / JCM 9153 / C-125) (Bacillus halodurans).